The primary structure comprises 253 residues: Flap endonuclease Xni (253 aa).

Aspartate 105 is a binding site for Mg(2+). Positions 162 to 251 (ERHQLLDYIA…HLKLSDLRVN (90 aa)) constitute a 5'-3' exonuclease domain. Leucine 172, proline 181, isoleucine 183, and isoleucine 186 together coordinate K(+). The segment at 185–190 (GIGPKS) is interaction with DNA.

The protein belongs to the Xni family. Requires Mg(2+) as cofactor. K(+) is required as a cofactor.

Functionally, has flap endonuclease activity. During DNA replication, flap endonucleases cleave the 5'-overhanging flap structure that is generated by displacement synthesis when DNA polymerase encounters the 5'-end of a downstream Okazaki fragment. The chain is Flap endonuclease Xni from Shewanella amazonensis (strain ATCC BAA-1098 / SB2B).